Consider the following 565-residue polypeptide: Oxygen-dependent choline dehydrogenase (565 aa).

Position 7–36 (7–36 (DYIICGAGSAGNVLATRLTEDPGVTVLLLE)) interacts with FAD. Catalysis depends on His-474, which acts as the Proton acceptor.

Belongs to the GMC oxidoreductase family. FAD is required as a cofactor.

It carries out the reaction choline + A = betaine aldehyde + AH2. It catalyses the reaction betaine aldehyde + NAD(+) + H2O = glycine betaine + NADH + 2 H(+). It functions in the pathway amine and polyamine biosynthesis; betaine biosynthesis via choline pathway; betaine aldehyde from choline (cytochrome c reductase route): step 1/1. Involved in the biosynthesis of the osmoprotectant glycine betaine. Catalyzes the oxidation of choline to betaine aldehyde and betaine aldehyde to glycine betaine at the same rate. The sequence is that of Oxygen-dependent choline dehydrogenase from Burkholderia pseudomallei (strain K96243).